The sequence spans 227 residues: ATP synthase F(0) complex subunit a (227 aa).

The next 6 helical transmembrane spans lie at 12-32 (PTYLGIPLIAVALTLPWILFP), 69-89 (WAVLLTSLMLFLITLNMLGLL), 98-118 (QLSLNMGLAVPLWLATVIIGM), 132-152 (EGTPVPLIPVLIIIETISLFI), 180-200 (FVLMPIMPTVAILTSIVLFLL), and 202-222 (LLEIAVAMIQAYVFVLLLSLY).

Belongs to the ATPase A chain family. Component of the ATP synthase complex composed at least of ATP5F1A/subunit alpha, ATP5F1B/subunit beta, ATP5MC1/subunit c (homooctomer), MT-ATP6/subunit a, MT-ATP8/subunit 8, ATP5ME/subunit e, ATP5MF/subunit f, ATP5MG/subunit g, ATP5MK/subunit k, ATP5MJ/subunit j, ATP5F1C/subunit gamma, ATP5F1D/subunit delta, ATP5F1E/subunit epsilon, ATP5PF/subunit F6, ATP5PB/subunit b, ATP5PD/subunit d, ATP5PO/subunit OSCP. ATP synthase complex consists of a soluble F(1) head domain (subunits alpha(3) and beta(3)) - the catalytic core - and a membrane F(0) domain - the membrane proton channel (subunits c, a, 8, e, f, g, k and j). These two domains are linked by a central stalk (subunits gamma, delta, and epsilon) rotating inside the F1 region and a stationary peripheral stalk (subunits F6, b, d, and OSCP). Interacts with DNAJC30; interaction is direct.

The protein resides in the mitochondrion inner membrane. It carries out the reaction H(+)(in) = H(+)(out). Subunit a, of the mitochondrial membrane ATP synthase complex (F(1)F(0) ATP synthase or Complex V) that produces ATP from ADP in the presence of a proton gradient across the membrane which is generated by electron transport complexes of the respiratory chain. ATP synthase complex consist of a soluble F(1) head domain - the catalytic core - and a membrane F(1) domain - the membrane proton channel. These two domains are linked by a central stalk rotating inside the F(1) region and a stationary peripheral stalk. During catalysis, ATP synthesis in the catalytic domain of F(1) is coupled via a rotary mechanism of the central stalk subunits to proton translocation. With the subunit c (ATP5MC1), forms the proton-conducting channel in the F(0) domain, that contains two crucial half-channels (inlet and outlet) that facilitate proton movement from the mitochondrial intermembrane space (IMS) into the matrix. Protons are taken up via the inlet half-channel and released through the outlet half-channel, following a Grotthuss mechanism. This chain is ATP synthase F(0) complex subunit a, found in Salmo salar (Atlantic salmon).